Consider the following 312-residue polypeptide: Ribosomal RNA small subunit methyltransferase H (312 aa).

S-adenosyl-L-methionine-binding positions include 32–34, D52, F79, D100, and Q107; that span reads AGH.

The protein belongs to the methyltransferase superfamily. RsmH family.

The protein localises to the cytoplasm. The enzyme catalyses cytidine(1402) in 16S rRNA + S-adenosyl-L-methionine = N(4)-methylcytidine(1402) in 16S rRNA + S-adenosyl-L-homocysteine + H(+). Functionally, specifically methylates the N4 position of cytidine in position 1402 (C1402) of 16S rRNA. This Listeria monocytogenes serovar 1/2a (strain ATCC BAA-679 / EGD-e) protein is Ribosomal RNA small subunit methyltransferase H.